Reading from the N-terminus, the 186-residue chain is Large ribosomal subunit protein uL5 (186 aa).

The protein belongs to the universal ribosomal protein uL5 family. As to quaternary structure, part of the 50S ribosomal subunit; contacts the 5S rRNA and probably tRNA. Forms a bridge to the 30S subunit in the 70S ribosome.

This is one of the proteins that bind and probably mediate the attachment of the 5S RNA into the large ribosomal subunit, where it forms part of the central protuberance. In the 70S ribosome it contacts protein S13 of the 30S subunit (bridge B1b), connecting the 2 subunits; this bridge is implicated in subunit movement. May contact the P site tRNA; the 5S rRNA and some of its associated proteins might help stabilize positioning of ribosome-bound tRNAs. This Pyrococcus furiosus (strain ATCC 43587 / DSM 3638 / JCM 8422 / Vc1) protein is Large ribosomal subunit protein uL5.